A 213-amino-acid chain; its full sequence is Ribonuclease HII (213 aa).

The 189-residue stretch at 25 to 213 (KTLCGVDEAG…FKPVKQLLPH (189 aa)) folds into the RNase H type-2 domain. The a divalent metal cation site is built by aspartate 31, glutamate 32, and aspartate 124.

It belongs to the RNase HII family. Requires Mn(2+) as cofactor. Mg(2+) is required as a cofactor.

The protein localises to the cytoplasm. The catalysed reaction is Endonucleolytic cleavage to 5'-phosphomonoester.. In terms of biological role, endonuclease that specifically degrades the RNA of RNA-DNA hybrids. This is Ribonuclease HII from Magnetococcus marinus (strain ATCC BAA-1437 / JCM 17883 / MC-1).